The chain runs to 444 residues: Sperm-associated antigen 4 protein (444 aa).

Residues 1–109 form a disordered region; sequence MRRNPRPGSA…GGASEPSGSP (109 aa). Residues 19-36 are compositionally biased toward low complexity; that stretch reads NFYSENSNSSHSATSGDS. The next 2 membrane-spanning stretches (helical) occupy residues 137–159 and 166–188; these read FLSL…LVCV and IRFL…WGLL. The stretch at 204-241 forms a coiled coil; sequence LSQYHHRVHSQGQQLQQLQAELSKLHKEVTSVRAAHSE. Positions 267–428 constitute an SUN domain; that stretch reads GASIDLEKTS…YRVRAHGVRI (162 aa).

Self-associates. Interacts with ODF1. May associate with microtubules. Interacts with SUN3 and SYNE1; suggesting the formation of a LINC complexs; a SUN domain-based heterotrimer of SPAG4 and SUN3 may associate with SYNE1. Interacts with SEPT12 and LMNB1; during spermatogenesis. Testis specific. Exclusively expressed in spermatids.

Its subcellular location is the membrane. It localises to the cytoplasm. It is found in the cytoskeleton. The protein resides in the flagellum axoneme. The protein localises to the nucleus envelope. Its subcellular location is the nucleus inner membrane. Its function is as follows. Involved in spermatogenesis. Required for sperm head formation but not required to establish and maintain general polarity of the sperm head. Required for anchoring and organization of the manchette. Required for targeting of SUN3 and probably SYNE1 through a probable SUN1:SYNE3 LINC complex to the nuclear envelope and involved in accurate posterior sperm head localization of the complex. May anchor SUN3 the nuclear envelope. Involved in maintenance of the nuclear envelope integrity. May assist the organization and assembly of outer dense fibers (ODFs), a specific structure of the sperm tail. This Rattus norvegicus (Rat) protein is Sperm-associated antigen 4 protein (Spag4).